The sequence spans 202 residues: Thymidylate kinase (202 aa).

ATP is bound at residue 13 to 20; sequence GTDGAGKS.

This sequence belongs to the thymidylate kinase family.

The enzyme catalyses dTMP + ATP = dTDP + ADP. Phosphorylation of dTMP to form dTDP in both de novo and salvage pathways of dTTP synthesis. This chain is Thymidylate kinase, found in Desulfotalea psychrophila (strain LSv54 / DSM 12343).